The following is a 613-amino-acid chain: Forkhead box protein O (613 aa).

Disordered stretches follow at residues 39-90 (RARS…KNSS), 182-205 (KSVR…RAKK), 217-269 (GLND…RLSP), and 317-360 (QGFS…PASG). Thr44 is modified (phosphothreonine; by PKB/AKT1). The span at 63 to 80 (TKASNQQLAPGDSQQAIQ) shows a compositional bias: polar residues. The residue at position 75 (Ser75) is a Phosphoserine. The span at 81–90 (NANAAKKNSS) shows a compositional bias: low complexity. A DNA-binding region (fork-head) is located at residues 95–201 (WGNLSYADLI…ETSRYEKRRG (107 aa)). Residue Ser190 is modified to Phosphoserine; by PKB/AKT1. Composition is skewed to polar residues over residues 221–230 (ATPSPSSSVS) and 256–265 (RASSNASSCG). Ser259 carries the post-translational modification Phosphoserine; by PKB/AKT1. Residues Ser262, Ser263, and Ser268 each carry the phosphoserine modification. The segment covering 327–336 (SQPPPPPYQP) has biased composition (pro residues). Residues 337–353 (PQHQQAQQQQQQQSPYA) are compositionally biased toward low complexity.

In terms of assembly, interacts with melt.

It is found in the cytoplasm. The protein localises to the nucleus. In terms of biological role, transcription factor involved in the regulation of the insulin signaling pathway. Consistently activates both the downstream target Thor\d4EBP and the feedback control target InR. Involved in negative regulation of the cell cycle, modulating cell growth and proliferation. In response to cellular stresses, such as nutrient deprivation or increased levels of reactive oxygen species, foxo is activated and inhibits growth through the action of target genes such as Thor. Foxo activated in the adult fat body can regulate lifespan in adults; an insulin peptide itself may function as one secondary messenger of insulin-regulated aging. Also regulates Lip4, homolog of human acid lipases, thereby acting as a key modulator of lipid metabolism by insulin signaling and integrates insulin responses to glucose and lipid homeostasis. The protein is Forkhead box protein O of Drosophila melanogaster (Fruit fly).